The following is a 146-amino-acid chain: Small ribosomal subunit protein uS9z (146 aa).

Belongs to the universal ribosomal protein uS9 family.

The chain is Small ribosomal subunit protein uS9z (RPS16A) from Arabidopsis thaliana (Mouse-ear cress).